The chain runs to 238 residues: D/L-lactic acid transporter (238 aa).

Transmembrane regions (helical) follow at residues 2–22 (VHQL…GVGV) and 39–59 (IFAI…FGNV). An NPA 1 motif is present at residues 62 to 64 (NPA). Transmembrane regions (helical) follow at residues 80–100 (FIPY…IVWI), 135–155 (FFVE…ISEI), and 158–178 (PGIV…GLGG). An NPA 2 motif is present at residues 185–187 (NLA). A helical membrane pass occupies residues 211–231 (YGIIVPGIAPFVGAAIAAWFM).

The protein belongs to the MIP/aquaporin (TC 1.A.8) family.

The protein localises to the cell membrane. Functionally, transporter that facilitates the transmembrane diffusion of D/L-lactic acid. Is involved in the cellular racemization of lactate and lactate metabolism. The transported molecule is indeed lactic acid and not the lactate anion, in agreement with the assumption that, with very few exceptions, MIPs (major intrinsic proteins) only facilitate the transport of uncharged solutes. Also facilitates urea and H(2)O(2) diffusion across membranes, but is not permeable to water, glycerol and dihydroxyacetone. The sequence is that of D/L-lactic acid transporter from Lactiplantibacillus plantarum (strain ATCC BAA-793 / NCIMB 8826 / WCFS1) (Lactobacillus plantarum).